A 153-amino-acid chain; its full sequence is Prostaglandin E synthase (153 aa).

Topologically, residues 1-13 (MPPPVLALVSGQA) are lumenal. A helical membrane pass occupies residues 14–42 (LPAFLLCSTLLVIKMYVVAVITGQVRLRK). Arg-39 provides a ligand contact to glutathione. Residues 43-61 (KAFANPEDALRHGGLQYCR) are Cytoplasmic-facing. A helical transmembrane segment spans residues 62–91 (SDQDVDRCLRAHRNDMETIYPFLFLGFVYS). Residue 74-78 (RNDME) participates in glutathione binding. Residues 92-96 (FLGPD) lie on the Lumenal side of the membrane. Residues 97 to 120 (PFIAQMHFLVFFLGRMVHTVAYLG) form a helical membrane-spanning segment. The glutathione site is built by His-114 and Tyr-118. At 121-124 (KLRA) the chain is on the cytoplasmic side. Residues 125 to 153 (PTRSLAYTVAQLPCASMALQIVWEAACHL) traverse the membrane as a helical segment. 127–131 (RSLAY) is a glutathione binding site.

It belongs to the MAPEG family. In terms of assembly, homotrimer. The cofactor is glutathione.

The protein localises to the membrane. It is found in the cytoplasm. The protein resides in the perinuclear region. It carries out the reaction prostaglandin H2 = prostaglandin E2. It catalyses the reaction 2-glyceryl-prostaglandin H2 = 2-glyceryl-prostaglandin E2. The enzyme catalyses prostaglandin G2 = (15S)-15-hydroperoxy-prostaglandin E2. The catalysed reaction is 1-chloro-2,4-dinitrobenzene + glutathione = 2,4-dinitrophenyl-S-glutathione + chloride + H(+). It carries out the reaction (5S)-hydroperoxy-(6E,8Z,11Z,14Z)-eicosatetraenoate + 2 glutathione = (5S)-hydroxy-(6E,8Z,11Z,14Z)-eicosatetraenoate + glutathione disulfide + H2O. Its pathway is lipid metabolism; prostaglandin biosynthesis. Its function is as follows. Terminal enzyme of the cyclooxygenase (COX)-2-mediated prostaglandin E2 (PGE2) biosynthetic pathway. Catalyzes the glutathione-dependent oxidoreduction of prostaglandin endoperoxide H2 (PGH2) to prostaglandin E2 (PGE2) in response to inflammatory stimuli. Plays a key role in inflammation response, fever and pain. Also catalyzes the oxidoreduction of endocannabinoids into prostaglandin glycerol esters and PGG2 into 15-hydroperoxy-PGE2. In addition, displays low glutathione transferase and glutathione-dependent peroxidase activities, toward 1-chloro-2,4-dinitrobenzene and 5-hydroperoxyicosatetraenoic acid (5-HPETE), respectively. The polypeptide is Prostaglandin E synthase (PTGES) (Canis lupus familiaris (Dog)).